Reading from the N-terminus, the 290-residue chain is 4-hydroxy-3-methylbut-2-enyl diphosphate reductase (290 aa).

Residue Cys-12 coordinates [4Fe-4S] cluster. (2E)-4-hydroxy-3-methylbut-2-enyl diphosphate contacts are provided by His-50 and His-83. The dimethylallyl diphosphate site is built by His-50 and His-83. Residues His-50 and His-83 each coordinate isopentenyl diphosphate. Cys-105 serves as a coordination point for [4Fe-4S] cluster. His-133 is a (2E)-4-hydroxy-3-methylbut-2-enyl diphosphate binding site. Dimethylallyl diphosphate is bound at residue His-133. His-133 is a binding site for isopentenyl diphosphate. Catalysis depends on Glu-135, which acts as the Proton donor. Position 173 (Thr-173) interacts with (2E)-4-hydroxy-3-methylbut-2-enyl diphosphate. [4Fe-4S] cluster is bound at residue Cys-202. The (2E)-4-hydroxy-3-methylbut-2-enyl diphosphate site is built by Ser-230, Asn-232, and Ser-274. The dimethylallyl diphosphate site is built by Ser-230, Asn-232, and Ser-274. Isopentenyl diphosphate-binding residues include Ser-230, Asn-232, and Ser-274.

It belongs to the IspH family. The cofactor is [4Fe-4S] cluster.

It carries out the reaction isopentenyl diphosphate + 2 oxidized [2Fe-2S]-[ferredoxin] + H2O = (2E)-4-hydroxy-3-methylbut-2-enyl diphosphate + 2 reduced [2Fe-2S]-[ferredoxin] + 2 H(+). The enzyme catalyses dimethylallyl diphosphate + 2 oxidized [2Fe-2S]-[ferredoxin] + H2O = (2E)-4-hydroxy-3-methylbut-2-enyl diphosphate + 2 reduced [2Fe-2S]-[ferredoxin] + 2 H(+). It functions in the pathway isoprenoid biosynthesis; dimethylallyl diphosphate biosynthesis; dimethylallyl diphosphate from (2E)-4-hydroxy-3-methylbutenyl diphosphate: step 1/1. The protein operates within isoprenoid biosynthesis; isopentenyl diphosphate biosynthesis via DXP pathway; isopentenyl diphosphate from 1-deoxy-D-xylulose 5-phosphate: step 6/6. Functionally, catalyzes the conversion of 1-hydroxy-2-methyl-2-(E)-butenyl 4-diphosphate (HMBPP) into a mixture of isopentenyl diphosphate (IPP) and dimethylallyl diphosphate (DMAPP). Acts in the terminal step of the DOXP/MEP pathway for isoprenoid precursor biosynthesis. The polypeptide is 4-hydroxy-3-methylbut-2-enyl diphosphate reductase (Nitratidesulfovibrio vulgaris (strain DP4) (Desulfovibrio vulgaris)).